We begin with the raw amino-acid sequence, 64 residues long: Large ribosomal subunit protein uL29 (64 aa).

It belongs to the universal ribosomal protein uL29 family.

The polypeptide is Large ribosomal subunit protein uL29 (Chloroherpeton thalassium (strain ATCC 35110 / GB-78)).